Reading from the N-terminus, the 142-residue chain is UPF0179 protein PYRAB06360 (142 aa).

This sequence belongs to the UPF0179 family.

This Pyrococcus abyssi (strain GE5 / Orsay) protein is UPF0179 protein PYRAB06360.